Consider the following 53-residue polypeptide: uncharacterized protein (53 aa).

A helical membrane pass occupies residues alanine 28 to tryptophan 45.

The protein localises to the host membrane. This is an uncharacterized protein from Acidianus convivator (ABV).